The chain runs to 305 residues: MYNGILPVYKERGLTSHDVVFKLRKILKTKKIGHTGTLDPEVSGVLPVCIGTATRVSDYVMDMGKSYNATITLGESTTTEDQTGEVIDKIDVQANAININEVDAVLKQFEGIIEQVPPMYSSVKVNGKKLYEYARKGETVERPIRKVNIDSIARTSELQFEDGKCHFNIEVKCGKGTYIRTLATDIGKQLGYPAHMSLLTRINSGGFDIKDSITLDQISQLHEQDTLQPHLFPLEYGLKSLPKIYVSDENIKTRILNGQKFNKKQFNQTIEQQLVFIDSETEKVMAIYIQHPEKNHEIKPKKVFN.

The Nucleophile role is filled by Asp39.

This sequence belongs to the pseudouridine synthase TruB family. Type 1 subfamily.

It catalyses the reaction uridine(55) in tRNA = pseudouridine(55) in tRNA. Its function is as follows. Responsible for synthesis of pseudouridine from uracil-55 in the psi GC loop of transfer RNAs. This Staphylococcus haemolyticus (strain JCSC1435) protein is tRNA pseudouridine synthase B.